The sequence spans 96 residues: Complement inhibitor RaCI4 (96 aa).

The first 24 residues, 1–24 (MSAFNIFALVVVVCALMINECCTS), serve as a signal peptide directing secretion. 3 disulfide bridges follow: Cys37-Cys61, Cys42-Cys63, and Cys57-Cys78.

It belongs to the RaCI family. In terms of tissue distribution, expressed in salivary glands.

Its subcellular location is the secreted. In terms of biological role, complement inhibitor. Prevents complement-mediated C5 activation by binding to C5. Binds C5 at a different binding site than the other tick complement inhibitors OmCI and CirpT1, and the drug eculizumab. Inhibits complement in human and guinea pig but not in other species tested (rabbit, rat, mouse, and pig). In Hyalomma rufipes (Tick), this protein is Complement inhibitor RaCI4.